Here is a 732-residue protein sequence, read N- to C-terminus: Conidiogenone synthase (732 aa).

Residues 1 to 311 (MADKITDEYA…SLCVPRYCKV (311 aa)) are terpene cyclase. A Mg(2+)-binding site is contributed by Asp97. Residues Asp97, 169–172 (RIVD), Asn213, 217–221 (SWDKE), and 307–308 (RY) each bind substrate. Positions 97 to 101 (DALNQ) match the DDXXD 1 motif. The NSE/DTE motif lies at 213–221 (NDLFSWDKE). The segment at 312-732 (DRNPYKDHLE…LRAMEETLQK (421 aa)) is prenyltransferase. The tract at residues 348–370 (KQSELKDPSSSTYKSHFSPLEPN) is disordered. Isopentenyl diphosphate-binding residues include Lys402, Arg405, and His434. 2 residues coordinate Mg(2+): Asp441 and Asp445. The DDXXD 2 signature appears at 441 to 445 (DDIQD). Arg450 is a binding site for dimethylallyl diphosphate. Residue Arg451 coordinates isopentenyl diphosphate. Dimethylallyl diphosphate contacts are provided by Lys529, Thr530, Gln565, Asn572, Lys582, and Lys592.

The protein in the N-terminal section; belongs to the terpene synthase family. In the C-terminal section; belongs to the FPP/GGPP synthase family. As to quaternary structure, hexamer. The cofactor is Mg(2+).

The catalysed reaction is isopentenyl diphosphate + (2E,6E)-farnesyl diphosphate = (2E,6E,10E)-geranylgeranyl diphosphate + diphosphate. Its pathway is secondary metabolite biosynthesis; terpenoid biosynthesis. Bifunctional terpene synthase; part of the gene cluster that mediates the biosynthesis of conidiogenone, a diterpene known to induce the conidiation. The bifunctional terpene synthase PchDS converts isopentenyl diphosphate (IPP) and dimethylallyl diphosphate (DMAPP) into deoxyconidiogenol. The C-terminal prenyltransferase (PT) domain of PchDS catalyzes formation of GGPP, whereas the N-terminal terpene cyclase (TC) domain catalyzes the cyclization of GGPP into deoxyconidiogenol. The cytochrome P450 monooxygenase PchP450 then catalyzes two rounds of oxidation to furnish conidiogenone. The sequence is that of Conidiogenone synthase from Penicillium rubens (strain ATCC 28089 / DSM 1075 / NRRL 1951 / Wisconsin 54-1255) (Penicillium chrysogenum).